A 478-amino-acid polypeptide reads, in one-letter code: Trigger factor (478 aa).

Residues Gly162–Pro243 enclose the PPIase FKBP-type domain. The disordered stretch occupies residues Lys424–Lys478. The segment covering Glu448–Lys478 has biased composition (acidic residues).

The protein belongs to the FKBP-type PPIase family. Tig subfamily.

It localises to the cytoplasm. The enzyme catalyses [protein]-peptidylproline (omega=180) = [protein]-peptidylproline (omega=0). Its function is as follows. Involved in protein export. Acts as a chaperone by maintaining the newly synthesized protein in an open conformation. Functions as a peptidyl-prolyl cis-trans isomerase. The sequence is that of Trigger factor from Mycobacterium sp. (strain KMS).